The sequence spans 89 residues: Large ribosomal subunit protein bL27 (89 aa).

Positions 1-20 (MAHKKAGGSSRNGRDSAGRR) are disordered.

Belongs to the bacterial ribosomal protein bL27 family.

In Jannaschia sp. (strain CCS1), this protein is Large ribosomal subunit protein bL27.